The sequence spans 347 residues: Holliday junction branch migration complex subunit RuvB (347 aa).

Positions 1-183 (MSEERFVSGH…FGVVLQLQFY (183 aa)) are large ATPase domain (RuvB-L). ATP is bound by residues leucine 22, arginine 23, glycine 64, lysine 67, threonine 68, threonine 69, 130-132 (EDF), arginine 173, tyrosine 183, and arginine 220. Threonine 68 contacts Mg(2+). The segment at 184 to 254 (SEEELTRILM…VADAGLRMMG (71 aa)) is small ATPAse domain (RuvB-S). Residues 257 to 347 (AMGLDTVDHK…PEGPVQPRLF (91 aa)) are head domain (RuvB-H). Positions 312 and 317 each coordinate DNA.

This sequence belongs to the RuvB family. In terms of assembly, homohexamer. Forms an RuvA(8)-RuvB(12)-Holliday junction (HJ) complex. HJ DNA is sandwiched between 2 RuvA tetramers; dsDNA enters through RuvA and exits via RuvB. An RuvB hexamer assembles on each DNA strand where it exits the tetramer. Each RuvB hexamer is contacted by two RuvA subunits (via domain III) on 2 adjacent RuvB subunits; this complex drives branch migration. In the full resolvosome a probable DNA-RuvA(4)-RuvB(12)-RuvC(2) complex forms which resolves the HJ.

The protein resides in the cytoplasm. It carries out the reaction ATP + H2O = ADP + phosphate + H(+). Its function is as follows. The RuvA-RuvB-RuvC complex processes Holliday junction (HJ) DNA during genetic recombination and DNA repair, while the RuvA-RuvB complex plays an important role in the rescue of blocked DNA replication forks via replication fork reversal (RFR). RuvA specifically binds to HJ cruciform DNA, conferring on it an open structure. The RuvB hexamer acts as an ATP-dependent pump, pulling dsDNA into and through the RuvAB complex. RuvB forms 2 homohexamers on either side of HJ DNA bound by 1 or 2 RuvA tetramers; 4 subunits per hexamer contact DNA at a time. Coordinated motions by a converter formed by DNA-disengaged RuvB subunits stimulates ATP hydrolysis and nucleotide exchange. Immobilization of the converter enables RuvB to convert the ATP-contained energy into a lever motion, pulling 2 nucleotides of DNA out of the RuvA tetramer per ATP hydrolyzed, thus driving DNA branch migration. The RuvB motors rotate together with the DNA substrate, which together with the progressing nucleotide cycle form the mechanistic basis for DNA recombination by continuous HJ branch migration. Branch migration allows RuvC to scan DNA until it finds its consensus sequence, where it cleaves and resolves cruciform DNA. This is Holliday junction branch migration complex subunit RuvB from Symbiobacterium thermophilum (strain DSM 24528 / JCM 14929 / IAM 14863 / T).